We begin with the raw amino-acid sequence, 1158 residues long: Protein transport protein Sec31B (1158 aa).

7 WD repeats span residues 4 to 47 (KELE…EIFE), 65 to 110 (VSSR…SSGK), 119 to 159 (KHTG…VPMT), 166 to 206 (NPPE…PIIK), 209 to 254 (SHSS…SPLK), 258 to 298 (SHSR…VVYK), and 301 to 341 (TQSS…WEAQ). The WD 8; interaction with SEC13 repeat unit spans residues 376–407 (SFAFGGKLVTFGLPSIPVQPVAQACSRPVFIS). Disordered stretches follow at residues 485–520 (LKSD…HTAK), 797–843 (TSSY…SSDH), and 968–1010 (GPQD…PEPQ). The segment covering 822 to 840 (QPSSVMPFSPSQPSPSQGS) has biased composition (low complexity).

Belongs to the WD repeat SEC31 family. In terms of assembly, COPII is composed of at least 5 proteins: the SEC23/24 complex, the SEC13/31 complex and SAR1. SEC13 and SEC31 make a 2:2 tetramer that forms the edge element of the COPII outer coat. The tetramer self-assembles in multiple copies to form the complete polyhedral cage. Interacts (via WD 8) with SEC13. Interacts with SEC31A. Post-translationally, monoubiquitinated by the BCR(KLHL12) E3 ubiquitin ligase complex, leading to regulate the size of COPII coats.

It is found in the cytoplasm. Its subcellular location is the cytoplasmic vesicle. It localises to the COPII-coated vesicle membrane. The protein localises to the endoplasmic reticulum membrane. Its function is as follows. As a component of the coat protein complex II (COPII), may function in vesicle budding and cargo export from the endoplasmic reticulum. The sequence is that of Protein transport protein Sec31B (Sec31b) from Mus musculus (Mouse).